The sequence spans 456 residues: MLHLYNSLTRKKEPFVSLRPGKIGMYVCGITVYDHCHLGHARSMVAFDVMVRYLRSQGFDVTYVRNITDIDDKIIARASERDVSIDELTAQYIDAMNNDTHALNILPPDHEPRATGHIETIIRLIQRLLEKGSAYVSENGDVCYEVDTFPEYGKLSHKDIEGLVSGSRVEIVKEKRSPLDFVLWKKAKPGEPSWPSPWGEGRPGWHIECSAMAMHELGEQFDIHGGGLDLQFPHHENEIAQSEAATGKPFANYWLHVGMLQVNGEKMAKSIGNFYTIADVLKEHHPEVIRYFLLSSHYRSPLNYSEENLLNAKKALIRLYQAVKDVPPQTADSKLDEYWQEQFNQAMNDDFNTPVALSVLFQLAHEVNKSNSPALAHTLKNLAGILGFLQKDPESFLQSGLAEEEKLVIEQLIAERLQARAERNWAKADQIRTDLLSKGIELEDGATGTTWRRIAE.

Cysteine 28 contributes to the Zn(2+) binding site. A 'HIGH' region motif is present at residues 30–40 (ITVYDHCHLGH). Zn(2+)-binding residues include cysteine 209, histidine 234, and glutamate 238. The 'KMSKS' region motif lies at 266–270 (KMAKS). Lysine 269 provides a ligand contact to ATP.

Belongs to the class-I aminoacyl-tRNA synthetase family. In terms of assembly, monomer. Zn(2+) is required as a cofactor.

Its subcellular location is the cytoplasm. It catalyses the reaction tRNA(Cys) + L-cysteine + ATP = L-cysteinyl-tRNA(Cys) + AMP + diphosphate. This is Cysteine--tRNA ligase from Legionella pneumophila (strain Corby).